Reading from the N-terminus, the 415-residue chain is NEDD8-specific protease 2 (415 aa).

Positions 1–42 (MRSNSIFTKEIDSEAVKKSSNLRPPSTGSSNSNGSDTASPKK) are disordered. Low complexity predominate over residues 26-38 (STGSSNSNGSDTA). Ser35 is modified (phosphoserine). Catalysis depends on residues His171, Asp188, and Cys229. Residues 320–415 (AVTSDSAQPH…QHTQQSIEIH (96 aa)) form a disordered region. Polar residues-rich tracts occupy residues 335–368 (MPSSQPQSRSESLPLTHPNSEPNPKLDSQPNSSP), 379–390 (TASTSVLPTSIL), and 405–415 (IQHTQQSIEIH). Position 367 is a phosphoserine (Ser367).

This sequence belongs to the peptidase C48 family.

Its subcellular location is the cytoplasm. It localises to the nucleus. Functionally, protease that catalyzes two essential functions in the NEDD8 pathway: processing of full-length NEDD8 to its mature form and deconjugation of NEDD8 from targeted proteins such as the pcu1, pcu2 and pcu4 cullins and other proteins. Has a role in meiosis. The chain is NEDD8-specific protease 2 (nep2) from Schizosaccharomyces pombe (strain 972 / ATCC 24843) (Fission yeast).